Reading from the N-terminus, the 614-residue chain is Probable LRR receptor-like serine/threonine-protein kinase At5g63710 (614 aa).

The first 50 residues, 1-50 (MAHSGNGESFHDPLRGFIQRNCFRWNNQKLILQCFMALAFVGITSSTTQP), serve as a signal peptide directing secretion. The Extracellular segment spans residues 51–224 (DIEGGALLQL…VTSSKKKLRD (174 aa)). 4 N-linked (GlcNAc...) asparagine glycosylation sites follow: Asn-65, Asn-125, Asn-146, and Asn-175. LRR repeat units follow at residues 115-139 (LKFL…LGNM), 141-163 (NLQT…WSQL), and 164-187 (SNLK…FFSI). Residues 225 to 245 (ITLTASCVASIILFLGAMVMY) form a helical membrane-spanning segment. Residues 246–613 (HHHRVRRTKY…DQESIRLSTA (368 aa)) are Cytoplasmic-facing. Thr-286 carries the post-translational modification Phosphothreonine. The region spanning 289-573 (FNESNLIGQG…GTGGLAEKWT (285 aa)) is the Protein kinase domain. 295 to 303 (IGQGGFGKV) serves as a coordination point for ATP. Position 312 is a phosphothreonine (Thr-312). Lys-317 contacts ATP. Ser-370 bears the Phosphoserine mark. Thr-389 carries the phosphothreonine modification. The active-site Proton acceptor is Asp-416. Phosphothreonine occurs at positions 449, 450, and 455. Tyr-463 carries the phosphotyrosine modification. Thr-466 carries the phosphothreonine modification. The residue at position 470 (Ser-470) is a Phosphoserine. A Phosphothreonine modification is found at Thr-545.

It belongs to the protein kinase superfamily. Ser/Thr protein kinase family.

It localises to the cell membrane. The enzyme catalyses L-seryl-[protein] + ATP = O-phospho-L-seryl-[protein] + ADP + H(+). It catalyses the reaction L-threonyl-[protein] + ATP = O-phospho-L-threonyl-[protein] + ADP + H(+). The chain is Probable LRR receptor-like serine/threonine-protein kinase At5g63710 from Arabidopsis thaliana (Mouse-ear cress).